The sequence spans 475 residues: MKMPILPPLPLASRHLLLASAIALAAGCAGLPDQRLAQEALERGDLATAQSNYQALAAMGYADAQVGLADMQVASGDSAQQAKAEKLYREAAQTSPRARARLGKWLAAKPGASDAEHREAERLLSQAFEQGEDSALVPLIVLYLQYPQSWPEIDPQQRIDQWRARGLPQADLAQIILYRTQGTYAQHLGEIEQVCQRWLRRMDVCWYELATVYQMQGNAEKQKVLLEQLRAAYKAGRVPGERVDSVAGVLADGELGQPDPQTAQALLEEIAPSYPAAWVSLAKLLYDYPDQGDLEKMLGYLKNAQDAAQPRAELLLGRLYYDGKWAPQDPRKAERHLLKAAASEPQANYYLGQIYRRGFLGKVYPQKAVDHLILAARAGQASADMALAQLWSQGRGIQPNRVNAYVFGQLAVQQQVPQASDLLGQIEAQLPPAERSQAQQLLKREQQSRGNNWQATVSLLQSQDSPINEEEPESL.

The signal sequence occupies residues 1–27; it reads MKMPILPPLPLASRHLLLASAIALAAG. Residue C28 is the site of N-palmitoyl cysteine attachment. C28 carries the S-diacylglycerol cysteine lipid modification. Residues 436–475 form a disordered region; that stretch reads SQAQQLLKREQQSRGNNWQATVSLLQSQDSPINEEEPESL. Positions 448–466 are enriched in polar residues; it reads SRGNNWQATVSLLQSQDSP.

It belongs to the AlgK family. In terms of assembly, interacts with AlgX.

Its subcellular location is the cell outer membrane. It functions in the pathway glycan biosynthesis; alginate biosynthesis. Its function is as follows. May be involved in the polymerization of mannuronate to alginate. The chain is Alginate biosynthesis protein AlgK (algK) from Pseudomonas aeruginosa (strain ATCC 15692 / DSM 22644 / CIP 104116 / JCM 14847 / LMG 12228 / 1C / PRS 101 / PAO1).